The following is a 565-amino-acid chain: Receptor-like serine/threonine-protein kinase NCRK (565 aa).

Residues 1 to 23 (MKMRVETALAILLVLISIQQCYG) form the signal peptide. Residues 24–103 (GVSNYTCTCF…SKKQYLSRKL (80 aa)) lie on the Extracellular side of the membrane. 5 N-linked (GlcNAc...) asparagine glycosylation sites follow: Asn-27, Asn-37, Asn-45, Asn-77, and Asn-85. The chain crosses the membrane as a helical span at residues 104–124 (VIVILLFCGVLISLAFLASMI). Residues 125–565 (CYICRKDKFS…PVLLEPSAHI (441 aa)) lie on the Cytoplasmic side of the membrane. The Protein kinase domain maps to 210 to 495 (FSSNSVIGHG…REVVQILSTI (286 aa)). ATP is bound by residues 216–224 (IGHGGSSCV) and Lys-238. The active-site Proton acceptor is Asp-339. Residues Thr-378 and Thr-383 each carry the phosphothreonine modification. Tyr-391 is modified (phosphotyrosine).

Belongs to the protein kinase superfamily. Ser/Thr protein kinase family. In terms of assembly, interacts with ARAC5. Phosphorylated. Mostly expressed in leaf primordia, root and shoot apical meristems, lateral root primordia, and stele of older roots and hypocotyls. In leaves and cotyledons, highest levels observed in trichomes, vasculatures, and hydathode endothem.

Its subcellular location is the cell membrane. It is found in the prevacuolar compartment membrane. The protein resides in the endosome. It catalyses the reaction L-seryl-[protein] + ATP = O-phospho-L-seryl-[protein] + ADP + H(+). It carries out the reaction L-threonyl-[protein] + ATP = O-phospho-L-threonyl-[protein] + ADP + H(+). In Arabidopsis thaliana (Mouse-ear cress), this protein is Receptor-like serine/threonine-protein kinase NCRK (NCRK).